A 297-amino-acid polypeptide reads, in one-letter code: Band 7 protein AAEL010189 (297 aa).

Positions 1–13 (MGVVESITNSTKP) are enriched in polar residues. The tract at residues 1 to 30 (MGVVESITNSTKPGVTKKSSPEAEDDSNGE) is disordered. A helical membrane pass occupies residues 37–57 (ILIFLSWVLVVLTMPFSLLVC).

This sequence belongs to the band 7/mec-2 family.

The protein localises to the membrane. The protein is Band 7 protein AAEL010189 of Aedes aegypti (Yellowfever mosquito).